Here is a 461-residue protein sequence, read N- to C-terminus: Cysteine--tRNA ligase (461 aa).

Cys-28 contributes to the Zn(2+) binding site. Positions 30 to 40 (ITVYDLCHIGH) match the 'HIGH' region motif. Positions 209, 234, and 238 each coordinate Zn(2+). The short motif at 266–270 (KMSKS) is the 'KMSKS' region element. Lys-269 is an ATP binding site.

It belongs to the class-I aminoacyl-tRNA synthetase family. As to quaternary structure, monomer. The cofactor is Zn(2+).

Its subcellular location is the cytoplasm. The enzyme catalyses tRNA(Cys) + L-cysteine + ATP = L-cysteinyl-tRNA(Cys) + AMP + diphosphate. This is Cysteine--tRNA ligase from Pectobacterium carotovorum subsp. carotovorum (strain PC1).